Reading from the N-terminus, the 311-residue chain is Olfactory receptor 6B1 (311 aa).

The Extracellular portion of the chain corresponds to 1–25; that stretch reads MELENQTRVTKFILVGFPGSLSMRA. Residue asparagine 5 is glycosylated (N-linked (GlcNAc...) asparagine). Residues 26 to 46 form a helical membrane-spanning segment; sequence AMFLIFLVAYILTVAENVIII. Residues 47-54 are Cytoplasmic-facing; it reads LLVLQNRP. The helical transmembrane segment at 55-75 threads the bilayer; it reads LHKPMYFFLANLSFLETWYIS. The Extracellular segment spans residues 76 to 99; it reads VTVPKLLFSFWSVNNSISFTLCMI. Cysteine 97 and cysteine 189 are disulfide-bonded. Residues 100 to 120 traverse the membrane as a helical segment; sequence QLYFFIALMCTECVLLAAMAY. The Cytoplasmic segment spans residues 121–139; it reads DRYVAICRPLHYPTIMSHG. A helical transmembrane segment spans residues 140 to 160; that stretch reads LCFRLALGSWAIGFGISLAKI. Over 161-196 the chain is Extracellular; it reads YFISCLSFCGPNVINHFFCDISPVLNLSCTDMSITE. A helical membrane pass occupies residues 197–217; that stretch reads LVDFILALVIFLFPLFITVLS. Residues 218 to 235 lie on the Cytoplasmic side of the membrane; it reads YGCILATILCMPTGKQKA. The helical transmembrane segment at 236–256 threads the bilayer; it reads FSTCASHLVVVTIFYSAIIFM. Residues 257-269 lie on the Extracellular side of the membrane; it reads YARPRVIHAFNMN. Residues 270–290 form a helical membrane-spanning segment; the sequence is KIISIFYAIVTPSLNPFIYCL. Over 291-311 the chain is Cytoplasmic; it reads RNREVKEALKKLAYCQASRSD.

Belongs to the G-protein coupled receptor 1 family.

The protein localises to the cell membrane. Odorant receptor. In Homo sapiens (Human), this protein is Olfactory receptor 6B1 (OR6B1).